Here is a 329-residue protein sequence, read N- to C-terminus: MTMDTSPSHDAERGVTDVLLAEPRGFCAGVDRAIEIVERAIRKFGAPIYVRHEIVHNTFVVNDLKAKGAIFIEDLADVPPGATLVFSAHGVSRAVRDEAEARGFSVYDATCPLVTKVHVEVAKLHKEGYEFIMIGHKGHPEVEGTMGQLSEGIYLVEDVDDVAQLRVTRPDRLAVVTQTTLSTDDAAEILAAVKRRFPQVREPKQQDICYATQNRQDAVKVLAPQVDVVVVVGSPTSSNSNRLRELAERLGTPAYMVDSASDLRPEWFEGSARVGLTAGASAPELLVREVIERLRALGAVSVRKMAGVEETVRFPLPLGLGDKSMEGVA.

[4Fe-4S] cluster is bound at residue Cys27. (2E)-4-hydroxy-3-methylbut-2-enyl diphosphate contacts are provided by His56 and His89. 2 residues coordinate dimethylallyl diphosphate: His56 and His89. 2 residues coordinate isopentenyl diphosphate: His56 and His89. Cys111 provides a ligand contact to [4Fe-4S] cluster. His139 is a binding site for (2E)-4-hydroxy-3-methylbut-2-enyl diphosphate. Residue His139 participates in dimethylallyl diphosphate binding. His139 is a binding site for isopentenyl diphosphate. The active-site Proton donor is the Glu141. Residue Thr179 participates in (2E)-4-hydroxy-3-methylbut-2-enyl diphosphate binding. Position 209 (Cys209) interacts with [4Fe-4S] cluster. Residues Ser237, Ser238, Asn239, and Ser281 each coordinate (2E)-4-hydroxy-3-methylbut-2-enyl diphosphate. Residues Ser237, Ser238, Asn239, and Ser281 each contribute to the dimethylallyl diphosphate site. 4 residues coordinate isopentenyl diphosphate: Ser237, Ser238, Asn239, and Ser281.

The protein belongs to the IspH family. Requires [4Fe-4S] cluster as cofactor.

The enzyme catalyses isopentenyl diphosphate + 2 oxidized [2Fe-2S]-[ferredoxin] + H2O = (2E)-4-hydroxy-3-methylbut-2-enyl diphosphate + 2 reduced [2Fe-2S]-[ferredoxin] + 2 H(+). It carries out the reaction dimethylallyl diphosphate + 2 oxidized [2Fe-2S]-[ferredoxin] + H2O = (2E)-4-hydroxy-3-methylbut-2-enyl diphosphate + 2 reduced [2Fe-2S]-[ferredoxin] + 2 H(+). Its pathway is isoprenoid biosynthesis; dimethylallyl diphosphate biosynthesis; dimethylallyl diphosphate from (2E)-4-hydroxy-3-methylbutenyl diphosphate: step 1/1. The protein operates within isoprenoid biosynthesis; isopentenyl diphosphate biosynthesis via DXP pathway; isopentenyl diphosphate from 1-deoxy-D-xylulose 5-phosphate: step 6/6. Its function is as follows. Catalyzes the conversion of 1-hydroxy-2-methyl-2-(E)-butenyl 4-diphosphate (HMBPP) into a mixture of isopentenyl diphosphate (IPP) and dimethylallyl diphosphate (DMAPP). Acts in the terminal step of the DOXP/MEP pathway for isoprenoid precursor biosynthesis. This chain is 4-hydroxy-3-methylbut-2-enyl diphosphate reductase, found in Methylibium petroleiphilum (strain ATCC BAA-1232 / LMG 22953 / PM1).